The primary structure comprises 262 residues: Ribosomal RNA small subunit methyltransferase A (262 aa).

Positions 12, 14, 38, 60, 83, and 102 each coordinate S-adenosyl-L-methionine.

It belongs to the class I-like SAM-binding methyltransferase superfamily. rRNA adenine N(6)-methyltransferase family. RsmA subfamily.

The protein resides in the cytoplasm. It carries out the reaction adenosine(1518)/adenosine(1519) in 16S rRNA + 4 S-adenosyl-L-methionine = N(6)-dimethyladenosine(1518)/N(6)-dimethyladenosine(1519) in 16S rRNA + 4 S-adenosyl-L-homocysteine + 4 H(+). In terms of biological role, specifically dimethylates two adjacent adenosines (A1518 and A1519) in the loop of a conserved hairpin near the 3'-end of 16S rRNA in the 30S particle. May play a critical role in biogenesis of 30S subunits. This chain is Ribosomal RNA small subunit methyltransferase A, found in Pelagibacter ubique (strain HTCC1062).